The sequence spans 155 residues: Transcriptional repressor NrdR (155 aa).

Residues 1 to 11 (MECPNCHQNAS) are compositionally biased toward polar residues. Positions 1–22 (MECPNCHQNASRVIDSRPSDEN) are disordered. Residues 3–34 (CPNCHQNASRVIDSRPSDENRAIRRRRECENC) fold into a zinc finger. Positions 49 to 139 (LLVVKNDGTR…IYREFKDMSS (91 aa)) constitute an ATP-cone domain.

This sequence belongs to the NrdR family. Zn(2+) serves as cofactor.

Functionally, negatively regulates transcription of bacterial ribonucleotide reductase nrd genes and operons by binding to NrdR-boxes. The polypeptide is Transcriptional repressor NrdR (Lactobacillus acidophilus (strain ATCC 700396 / NCK56 / N2 / NCFM)).